The primary structure comprises 174 residues: Recombination protein RecR (174 aa).

Residues 30–45 (CNACRTFTEEEECTIC) form a C4-type zinc finger. Residues 54–149 (GQLCIVEMPE…KVTRIAHGIP (96 aa)) form the Toprim domain.

Belongs to the RecR family.

Its function is as follows. May play a role in DNA repair. It seems to be involved in an RecBC-independent recombinational process of DNA repair. It may act with RecF and RecO. In Haemophilus ducreyi (strain 35000HP / ATCC 700724), this protein is Recombination protein RecR.